A 328-amino-acid chain; its full sequence is N-acyl-aromatic-L-amino acid amidohydrolase (carboxylate-forming) A (328 aa).

Positions 30 and 33 each coordinate Zn(2+). Substrate is bound by residues Arg74 and 81 to 82; that span reads NR. His127 is a Zn(2+) binding site. Glu189 and Tyr300 together coordinate substrate.

The protein belongs to the AspA/AstE family. Aspartoacylase subfamily. As to quaternary structure, homotetramer. Zn(2+) serves as cofactor.

The protein resides in the apical cell membrane. It is found in the cytoplasm. It carries out the reaction an N-acyl-aromatic L-alpha-amino acid + H2O = an aromatic L-alpha-amino acid + a carboxylate. The catalysed reaction is an N-acetyl-L-cysteine-S-conjugate + H2O = an S-substituted L-cysteine + acetate. In terms of biological role, plays an important role in deacetylating mercapturic acids in kidney proximal tubules. The sequence is that of N-acyl-aromatic-L-amino acid amidohydrolase (carboxylate-forming) A (acy3.1) from Danio rerio (Zebrafish).